Consider the following 100-residue polypeptide: Large ribosomal subunit protein bL28 (100 aa).

The disordered stretch occupies residues Met-1–Ser-21. Residues Gln-10–Ser-19 show a composition bias toward polar residues.

Belongs to the bacterial ribosomal protein bL28 family.

This is Large ribosomal subunit protein bL28 from Ehrlichia canis (strain Jake).